The chain runs to 502 residues: GTPase Obg (502 aa).

In terms of domain architecture, Obg spans 2 to 159; the sequence is NRFIDRVVLH…HDLILELKSM (158 aa). In terms of domain architecture, OBG-type G spans 160-341; it reads ADVGLVGFPS…LKYKLLEIVQ (182 aa). GTP-binding positions include 166–173, 191–195, 212–215, 292–295, and 322–324; these read GFPSAGKS, FTTLQ, DVPG, NKAD, and SAV. The Mg(2+) site is built by S173 and T193. The 81-residue stretch at 364 to 444 folds into the OCT domain; it reads DGRRRREEFE…IGGVTFEWEP (81 aa).

It belongs to the TRAFAC class OBG-HflX-like GTPase superfamily. OBG GTPase family. Monomer. Requires Mg(2+) as cofactor.

The protein resides in the cytoplasm. Its function is as follows. An essential GTPase which binds GTP, GDP and possibly (p)ppGpp with moderate affinity, with high nucleotide exchange rates and a fairly low GTP hydrolysis rate. Plays a role in control of the cell cycle, stress response, ribosome biogenesis and in those bacteria that undergo differentiation, in morphogenesis control. The chain is GTPase Obg from Corynebacterium efficiens (strain DSM 44549 / YS-314 / AJ 12310 / JCM 11189 / NBRC 100395).